Reading from the N-terminus, the 609-residue chain is Glutamine--fructose-6-phosphate aminotransferase [isomerizing] (609 aa).

The Nucleophile; for GATase activity role is filled by Cys-2. The region spanning 2 to 217 (CGIVGAIAGR…EGDTAELRRD (216 aa)) is the Glutamine amidotransferase type-2 domain. 2 SIS domains span residues 284 to 425 (TADA…LQGR) and 458 to 599 (WAER…VDKP). The For Fru-6P isomerization activity role is filled by Lys-604.

Homodimer.

It localises to the cytoplasm. The catalysed reaction is D-fructose 6-phosphate + L-glutamine = D-glucosamine 6-phosphate + L-glutamate. Functionally, catalyzes the first step in hexosamine metabolism, converting fructose-6P into glucosamine-6P using glutamine as a nitrogen source. In Xanthomonas campestris pv. campestris (strain ATCC 33913 / DSM 3586 / NCPPB 528 / LMG 568 / P 25), this protein is Glutamine--fructose-6-phosphate aminotransferase [isomerizing].